A 612-amino-acid chain; its full sequence is MSAELIAVYKDEQIIDLESAKVLGLSDGIKALKGTEPIYFDDSPLALEVIRHSCAHLLAQSLKALYPDAKFFVGPVVEEGFYYDFKTTSKISEEDLPKIEAKMKEFAKSKLAITKETLTREQALERFKGDELKHAVMSKISGDIFGVYQQGEFEDLCKGPHLPNTRFLNHFKLTKLAGAYLGGDENNEMLIRIYGIAFATKEGLKDYLFQIEEAKKRDHRKLGVELGLFSFDDEIGAGLPLWLPKGARLRKRIEDLLSQALLLRGYEPVKGPEILKSDVWKISGHYDNYKENMYFTTIDEQEYGIKPMNCVGHIKVYQSALHSYRDLPLRFYEYGVVHRHEKSGVLHGLLRVREFTQDDAHIFCSFEQIQSEVSAILDFTHKIMQAFGFSYEMELSTRPAKSIGDDKVWEKATNALKEALKEHRIDYKIDEGGGAFYGPKIDIKITDALKRKWQCGTIQVDMNLPERFKLAFTNEYNHAEQPVMIHRAILGSFERFIAILSEHFGGNFPFFVAPTQIALIPINEEHHVFALKLKEALKKCDIFVEVLDKNDSLNKKVRLAEKQKIPMILVLGNEEVETEILSIRDREKQAQYKMPLKEFLNMVESKMQEVSF.

Positions 218-509 (DHRKLGVELG…LSEHFGGNFP (292 aa)) are catalytic. Positions 310, 361, and 486 each coordinate Zn(2+).

It belongs to the class-II aminoacyl-tRNA synthetase family. Homodimer. The cofactor is Zn(2+).

It is found in the cytoplasm. The enzyme catalyses tRNA(Thr) + L-threonine + ATP = L-threonyl-tRNA(Thr) + AMP + diphosphate + H(+). In terms of biological role, catalyzes the attachment of threonine to tRNA(Thr) in a two-step reaction: L-threonine is first activated by ATP to form Thr-AMP and then transferred to the acceptor end of tRNA(Thr). Also edits incorrectly charged L-seryl-tRNA(Thr). The sequence is that of Threonine--tRNA ligase from Helicobacter pylori (strain J99 / ATCC 700824) (Campylobacter pylori J99).